An 823-amino-acid chain; its full sequence is Transcription factor SPT20 homolog-like 1 (823 aa).

5 disordered regions span residues S246–R273, P369–P524, G560–A601, V631–S669, and L720–I757. The segment covering S423–T440 has biased composition (polar residues). Composition is skewed to low complexity over residues S469–S509, A568–S582, and Q636–Q650.

It belongs to the SPT20 family.

This is Transcription factor SPT20 homolog-like 1 (SUPT20HL1) from Homo sapiens (Human).